The chain runs to 749 residues: 1,4-alpha-glucan branching enzyme GlgB (749 aa).

Asp-427 serves as the catalytic Nucleophile. Residue Glu-480 is the Proton donor of the active site.

This sequence belongs to the glycosyl hydrolase 13 family. GlgB subfamily. As to quaternary structure, monomer.

The catalysed reaction is Transfers a segment of a (1-&gt;4)-alpha-D-glucan chain to a primary hydroxy group in a similar glucan chain.. It participates in glycan biosynthesis; glycogen biosynthesis. Functionally, catalyzes the formation of the alpha-1,6-glucosidic linkages in glycogen by scission of a 1,4-alpha-linked oligosaccharide from growing alpha-1,4-glucan chains and the subsequent attachment of the oligosaccharide to the alpha-1,6 position. The chain is 1,4-alpha-glucan branching enzyme GlgB from Thermobifida fusca (strain YX).